The sequence spans 404 residues: Diphosphomevalonate decarboxylase mvd1 (404 aa).

Residues 25 to 28, arginine 82, 161 to 166, and threonine 217 each bind (R)-5-diphosphomevalonate; these read YWGK and SGSACR.

This sequence belongs to the diphosphomevalonate decarboxylase family. As to quaternary structure, homodimer.

The catalysed reaction is (R)-5-diphosphomevalonate + ATP = isopentenyl diphosphate + ADP + phosphate + CO2. Its pathway is isoprenoid biosynthesis; isopentenyl diphosphate biosynthesis via mevalonate pathway; isopentenyl diphosphate from (R)-mevalonate: step 3/3. Its function is as follows. Diphosphomevalonate decarboxylase; part of the second module of ergosterol biosynthesis pathway that includes the middle steps of the pathway. Mvd1 converts diphosphomevalonate into isopentenyl diphosphate. The second module is carried out in the vacuole and involves the formation of farnesyl diphosphate, which is also an important intermediate in the biosynthesis of ubiquinone, dolichol, heme and prenylated proteins. Activity by the mevalonate kinase erg12 (AFUA_4G07780) first converts mevalonate into 5-phosphomevalonate. 5-phosphomevalonate is then further converted to 5-diphosphomevalonate by the phosphomevalonate kinase erg8 (AFUA_5G10680). The diphosphomevalonate decarboxylase mvd1 (AFUA_4G07130) then produces isopentenyl diphosphate. The isopentenyl-diphosphate delta-isomerase idi1 (AFUA_6G11160) then catalyzes the 1,3-allylic rearrangement of the homoallylic substrate isopentenyl (IPP) to its highly electrophilic allylic isomer, dimethylallyl diphosphate (DMAPP). Finally the farnesyl diphosphate synthase erg20 (AFUA_5G02450) catalyzes the sequential condensation of isopentenyl pyrophosphate with dimethylallyl pyrophosphate, and then with the resultant geranylpyrophosphate to the ultimate product farnesyl pyrophosphate. This Aspergillus fumigatus (strain ATCC MYA-4609 / CBS 101355 / FGSC A1100 / Af293) (Neosartorya fumigata) protein is Diphosphomevalonate decarboxylase mvd1.